Reading from the N-terminus, the 299-residue chain is Transcription factor MYB17 (299 aa).

HTH myb-type domains lie at 9 to 61 (KIGL…TNYL) and 62 to 116 (RPDI…KKRL). 2 DNA-binding regions (H-T-H motif) span residues 37–61 (WRTL…TNYL) and 89–112 (WAAI…NTHL).

Interacts with LFY. As to expression, expressed in the shoot apex, young flower buds, developing carpels and siliques. Expressed in floral meristem, initiating floral primordia and developing flowers.

It localises to the nucleus. Transcription factor that may play a role in flower development by repressing ANT. Regulates the transition of meristem identity from vegetative growth to flowering. Acts downstream of LFY and upstream of AP1. Directly activates AP1 to promote floral fate. Together with LFY and AP1 may constitute a regulatory network that contributes to an abrupt and robust meristem identity transition. The sequence is that of Transcription factor MYB17 from Arabidopsis thaliana (Mouse-ear cress).